A 284-amino-acid polypeptide reads, in one-letter code: Cell division protein FtsQ (284 aa).

Over M1 to N31 the chain is Cytoplasmic. The helical transmembrane segment at A32 to L52 threads the bilayer. At Y53–P284 the chain is on the periplasmic side. The 70-residue stretch at A59–R128 folds into the POTRA domain.

This sequence belongs to the FtsQ/DivIB family. FtsQ subfamily. As to quaternary structure, part of a complex composed of FtsB, FtsL and FtsQ.

The protein localises to the cell inner membrane. In terms of biological role, essential cell division protein. May link together the upstream cell division proteins, which are predominantly cytoplasmic, with the downstream cell division proteins, which are predominantly periplasmic. May control correct divisome assembly. The sequence is that of Cell division protein FtsQ from Acinetobacter oleivorans (strain JCM 16667 / KCTC 23045 / DR1).